The primary structure comprises 213 residues: Na(+)-translocating NADH-quinone reductase subunit D (213 aa).

The next 7 membrane-spanning stretches (helical) occupy residues 21 to 41 (ILIA…VQTA), 42 to 62 (ITMG…VSLL), 77 to 97 (IIIS…FFDI), 101 to 121 (LSVF…SESL), 131 to 151 (FLDG…IGVI), 153 to 173 (ELFG…VYAS), and 183 to 203 (LSLM…IWLV).

This sequence belongs to the NqrDE/RnfAE family. Composed of six subunits; NqrA, NqrB, NqrC, NqrD, NqrE and NqrF.

It localises to the cell inner membrane. The enzyme catalyses a ubiquinone + n Na(+)(in) + NADH + H(+) = a ubiquinol + n Na(+)(out) + NAD(+). Functionally, NQR complex catalyzes the reduction of ubiquinone-1 to ubiquinol by two successive reactions, coupled with the transport of Na(+) ions from the cytoplasm to the periplasm. NqrA to NqrE are probably involved in the second step, the conversion of ubisemiquinone to ubiquinol. The protein is Na(+)-translocating NADH-quinone reductase subunit D of Chlamydia pneumoniae (Chlamydophila pneumoniae).